A 737-amino-acid polypeptide reads, in one-letter code: Exostosin-1c (737 aa).

Residues 1 to 6 (MQARKK) are Cytoplasmic-facing. Residues 7-27 (YVLLGLCTCCWILLYYWAGLQ) form a helical; Signal-anchor for type II membrane protein membrane-spanning segment. Topologically, residues 28–737 (ERLLGLITHR…RKRYKDLERV (710 aa)) are lumenal. N-linked (GlcNAc...) asparagine glycosylation is found at N194 and N322. UDP-N-acetyl-alpha-D-glucosamine-binding residues include R432, R540, D556, E557, D558, E644, D645, and R692. Residue D558 coordinates Mn(2+). A disulfide bridge links C643 with C695. D645 is an active-site residue.

This sequence belongs to the glycosyltransferase 47 family. Mn(2+) serves as cofactor.

The protein localises to the endoplasmic reticulum membrane. The enzyme catalyses 3-O-{[(1-&gt;4)-beta-D-GlcA-(1-&gt;4)-alpha-D-GlcNAc](n)-(1-&gt;4)-beta-D-GlcA-(1-&gt;3)-beta-D-Gal-(1-&gt;3)-beta-D-Gal-(1-&gt;4)-beta-D-Xyl}-L-seryl-[protein] + UDP-N-acetyl-alpha-D-glucosamine = 3-O-{alpha-D-GlcNAc-[(1-&gt;4)-beta-D-GlcA-(1-&gt;4)-alpha-D-GlcNAc](n)-(1-&gt;4)-beta-D-GlcA-(1-&gt;3)-beta-D-Gal-(1-&gt;3)-beta-D-Gal-(1-&gt;4)-beta-D-Xyl}-L-seryl-[protein] + UDP + H(+). It catalyses the reaction 3-O-{alpha-D-GlcNAc-[(1-&gt;4)-beta-D-GlcA-(1-&gt;4)-alpha-D-GlcNAc](n)-(1-&gt;4)-beta-D-GlcA-(1-&gt;3)-beta-D-Gal-(1-&gt;3)-beta-D-Gal-(1-&gt;4)-beta-D-Xyl}-L-seryl-[protein] + UDP-alpha-D-glucuronate = 3-O-{[(1-&gt;4)-beta-D-GlcA-(1-&gt;4)-alpha-D-GlcNAc](n+1)-(1-&gt;4)-beta-D-GlcA-(1-&gt;3)-beta-D-Gal-(1-&gt;3)-beta-D-Gal-(1-&gt;4)-beta-D-Xyl}-L-seryl-[protein] + UDP + H(+). The protein operates within protein modification; protein glycosylation. Functionally, glycosyltransferase required for the biosynthesis of heparan-sulfate. The polypeptide is Exostosin-1c (ext1c) (Danio rerio (Zebrafish)).